A 260-amino-acid polypeptide reads, in one-letter code: Phosphate import ATP-binding protein PstB (260 aa).

Positions 13–255 constitute an ABC transporter domain; the sequence is MRAQGVNVFY…PKQERTKDYI (243 aa). ATP is bound at residue 45–52; that stretch reads GPSGCGKS.

Belongs to the ABC transporter superfamily. Phosphate importer (TC 3.A.1.7) family. In terms of assembly, the complex is composed of two ATP-binding proteins (PstB), two transmembrane proteins (PstC and PstA) and a solute-binding protein (PstS).

It localises to the cell inner membrane. The enzyme catalyses phosphate(out) + ATP + H2O = ADP + 2 phosphate(in) + H(+). In terms of biological role, part of the ABC transporter complex PstSACB involved in phosphate import. Responsible for energy coupling to the transport system. This chain is Phosphate import ATP-binding protein PstB, found in Sphingopyxis alaskensis (strain DSM 13593 / LMG 18877 / RB2256) (Sphingomonas alaskensis).